Here is a 373-residue protein sequence, read N- to C-terminus: 3 beta-hydroxysteroid dehydrogenase/Delta 5--&gt;4-isomerase type 1 (373 aa).

NADP(+) contacts are provided by residues 10–15, tyrosine 155, and lysine 159; that span reads GAGGFV. Catalysis depends on lysine 159, which acts as the Proton donor. Residues 288-308 form a helical membrane-spanning segment; the sequence is LPLLYWLAFLLETVSFLLRPV.

Belongs to the 3-beta-HSD family. In terms of tissue distribution, steroidogenic tissues (includes testes, ovaries and adrenal glands).

It localises to the endoplasmic reticulum membrane. The protein localises to the mitochondrion membrane. It catalyses the reaction a 3beta-hydroxy-Delta(5)-steroid + NAD(+) = a 3-oxo-Delta(5)-steroid + NADH + H(+). The enzyme catalyses pregnenolone + NAD(+) = pregn-5-ene-3,20-dione + NADH + H(+). It carries out the reaction 3beta-hydroxyandrost-5-en-17-one + NAD(+) = androst-5-ene-3,17-dione + NADH + H(+). The catalysed reaction is androst-5-en-3beta,17beta-diol + NAD(+) = 17beta-hydroxy-androst-5-en-3-one + NADH + H(+). It catalyses the reaction a 3beta-hydroxysteroid + NADP(+) = a 3-oxosteroid + NADPH + H(+). The enzyme catalyses 5alpha-androstane-3beta,17beta-diol + NADP(+) = 17beta-hydroxy-5alpha-androstan-3-one + NADPH + H(+). It carries out the reaction 3beta-hydroxy-5alpha-androstan-17-one + NADP(+) = 5alpha-androstan-3,17-dione + NADPH + H(+). The catalysed reaction is a 3-oxo-Delta(5)-steroid = a 3-oxo-Delta(4)-steroid. It catalyses the reaction pregn-5-ene-3,20-dione = progesterone. The enzyme catalyses androst-5-ene-3,17-dione = androst-4-ene-3,17-dione. It carries out the reaction 17beta-hydroxy-androst-5-en-3-one = testosterone. The catalysed reaction is 5alpha-androstane-3beta,17beta-diol + NAD(+) = 17beta-hydroxy-5alpha-androstan-3-one + NADH + H(+). Its pathway is steroid hormone biosynthesis. The protein operates within steroid metabolism. Functionally, a bifunctional enzyme responsible for the oxidation and isomerization of 3beta-hydroxy-Delta(5)-steroid precursors to 3-oxo-Delta(4)-steroids, an essential step in steroid hormone biosynthesis. Specifically catalyzes the conversion of pregnenolone to progesterone, 17alpha-hydroxypregnenolone to 17alpha-hydroxyprogesterone, dehydroepiandrosterone (DHEA) to 4-androstenedione, and androstenediol to testosterone. Additionally, catalyzes the interconversion between 3beta-hydroxy and 3-oxo-5alpha-androstane steroids controlling the bioavalability of the active forms. Specifically converts dihydrotestosterone to its inactive form 5alpha-androstanediol, that does not bind androgen receptor/AR. Also converts androstanedione, a precursor of testosterone and estrone, to epiandrosterone. Expected to use NAD(+) as preferred electron donor for the 3-beta-hydroxy-steroid dehydrogenase activity and NADPH for the 3-ketosteroid reductase activity. This is 3 beta-hydroxysteroid dehydrogenase/Delta 5--&gt;4-isomerase type 1 from Mus musculus (Mouse).